Consider the following 747-residue polypeptide: MDFLDEPFPDVGTYEDFHTIDWLREKSRDTDRHRKITSKSKESIWEFIKSLLDAWSGWVVMLLIGLLAGTLAGVIDLAVDWMTDLKEGVCLSAFWYSHEQCCWTSNETTFEDRDKCPLWQKWSELLLSQSEGASAYILNYLMYILWALLFAFLAVSLVRVFAPYACGSGIPEIKTILSGFIIRGYLGKWTLLIKTVTLVLVVSSGLSLGKEGPLVHVACCCGNFFSSLFSKYSKNEGKRREVLSAAAAAGVSVAFGAPIGGVLFSLEEVSYYFPLKTLWRSFFAALVAAFTLRSINPFGNSRLVLFYVEYHTPWYMAELFPFILLGVFGGLWGTVFTRCNIAWCRRRKTTRLGKYPVLEVIVVTAITAIIAYPNPYTRQSTSELISELFNDCGALESSQLCDYINDPNMTRPVDDIPDRPAGVGVYTAMWQLALALIFKIVITIFTFGMKIPSGLFIPSMAVGAMAGRMVGIGVEQLAYHHHDWIIFRNWCRPGADCVTPGLYAMVGAAACLGGVTRMTVSLVVIMFELTGGLEYIVPLMAAAVTSKWVADAFGKEGIYEAHIHLNGYPFLDVKDEFTHRTLATDVMRPRRGEPPLSVLTQDSMTVEDVETLIKETDYNGFPVVVSRDSERLIGFAQRRELILAIKNARQRQEGIVSNSIMYFTEEPPELPANSPHPLKLRRILNLSPFTVTDHTPMETVVDIFRKLGLRQCLVTRSGRLLGIITKKDVLRHMAQMANQDPESIIFN.

The segment at 1–50 is required for localization in the endoplasmic reticulum; the sequence is MDFLDEPFPDVGTYEDFHTIDWLREKSRDTDRHRKITSKSKESIWEFIKS. Residues 1–54 lie on the Cytoplasmic side of the membrane; that stretch reads MDFLDEPFPDVGTYEDFHTIDWLREKSRDTDRHRKITSKSKESIWEFIKSLLDA. A run of 2 helical transmembrane segments spans residues 55 to 92 and 138 to 161; these read WSGWVVMLLIGLLAGTLAGVIDLAVDWMTDLKEGVCLS and LNYLMYILWALLFAFLAVSLVRVF. A Selectivity filter part_1 motif is present at residues 167–171; it reads GSGIP. Ser168 lines the chloride pocket. The helical intramembrane region spans 170–177; that stretch reads IPEIKTIL. 2 helical membrane passes run 187-205 and 211-230; these read GKWTLLIKTVTLVLVVSSG and EGPLVHVACCCGNFFSSLFS. The Selectivity filter part_2 signature appears at 209–213; that stretch reads GKEGP. 2 consecutive intramembrane regions (helical) follow at residues 242–254 and 258–266; these read VLSAAAAAGVSVA and PIGGVLFSL. The next 5 membrane-spanning stretches (helical) occupy residues 278–296, 320–345, 352–372, 429–449, and 454–473; these read LWRSFFAALVAAFTLRSIN, FPFILLGVFGGLWGTVFTRCNIAWCR, LGKYPVLEVIVVTAITAIIAY, MWQLALALIFKIVITIFTFGM, and GLFIPSMAVGAMAGRMVGIG. The Selectivity filter part_3 signature appears at 454–458; it reads GLFIP. Phe456 contacts chloride. Intramembrane regions (helical) lie at residues 501-515 and 519-530; these read GLYAMVGAAACLGGV and TVSLVVIMFELT. The note=Loop between two helices intramembrane region spans 531-534; it reads GGLE. A helical membrane pass occupies residues 535–553; that stretch reads YIVPLMAAAVTSKWVADAF. At 554–747 the chain is on the cytoplasmic side; the sequence is GKEGIYEAHI…NQDPESIIFN (194 aa). Tyr559 contacts chloride. One can recognise a CBS 1 domain in the interval 587–653; the sequence is MRPRRGEPPL…AIKNARQRQE (67 aa). Residues Ser597 and 618-620 contribute to the ATP site; that span reads YNG. The tract at residues 654–683 is required for localization in the endoplasmic reticulum; the sequence is GIVSNSIMYFTEEPPELPANSPHPLKLRRI. A CBS 2 domain is found at 684–742; the sequence is LNLSPFTVTDHTPMETVVDIFRKLGLRQCLVTRSGRLLGIITKKDVLRHMAQMANQDPE. 725-728 serves as a coordination point for ATP; that stretch reads TKKD.

This sequence belongs to the chloride channel (TC 2.A.49) family. ClC-4/CLCN4 subfamily. As to expression, strongly expressed in liver and brain, but also in heart, muscle, kidney and spleen.

It localises to the early endosome membrane. It is found in the late endosome membrane. The protein resides in the endoplasmic reticulum membrane. Its subcellular location is the lysosome membrane. The protein localises to the recycling endosome membrane. In terms of biological role, strongly outwardly rectifying, electrogenic H(+)/Cl(-)exchanger which mediates the exchange of chloride ions against protons. The CLC channel family contains both chloride channels and proton-coupled anion transporters that exchange chloride or another anion for protons. The presence of conserved gating glutamate residues is typical for family members that function as antiporters. The protein is H(+)/Cl(-) exchange transporter 4 (Clcn4) of Rattus norvegicus (Rat).